The chain runs to 414 residues: Multifunctional CCA protein (414 aa).

Residues Gly-8 and Arg-11 each contribute to the ATP site. The CTP site is built by Gly-8 and Arg-11. Residues Asp-21 and Asp-23 each coordinate Mg(2+). Residues Arg-91, Arg-137, and Arg-140 each contribute to the ATP site. Positions 91, 137, and 140 each coordinate CTP. The HD domain maps to 228–329; sequence TGIHTLMTLA…LKLFDAVDVW (102 aa).

The protein belongs to the tRNA nucleotidyltransferase/poly(A) polymerase family. Bacterial CCA-adding enzyme type 1 subfamily. As to quaternary structure, monomer. Can also form homodimers and oligomers. Mg(2+) serves as cofactor. It depends on Ni(2+) as a cofactor.

It catalyses the reaction a tRNA precursor + 2 CTP + ATP = a tRNA with a 3' CCA end + 3 diphosphate. The catalysed reaction is a tRNA with a 3' CCA end + 2 CTP + ATP = a tRNA with a 3' CCACCA end + 3 diphosphate. Catalyzes the addition and repair of the essential 3'-terminal CCA sequence in tRNAs without using a nucleic acid template. Adds these three nucleotides in the order of C, C, and A to the tRNA nucleotide-73, using CTP and ATP as substrates and producing inorganic pyrophosphate. tRNA 3'-terminal CCA addition is required both for tRNA processing and repair. Also involved in tRNA surveillance by mediating tandem CCA addition to generate a CCACCA at the 3' terminus of unstable tRNAs. While stable tRNAs receive only 3'-terminal CCA, unstable tRNAs are marked with CCACCA and rapidly degraded. The sequence is that of Multifunctional CCA protein from Serratia proteamaculans (strain 568).